The following is a 450-amino-acid chain: CD209 antigen (450 aa).

The Cytoplasmic portion of the chain corresponds to 1 to 37; the sequence is MSDSKEPSVQQLGLLEEEQLRGLGFRQTRGYKSLAGC. 3 short sequence motifs (endocytosis signal) span residues 14 to 15, 16 to 18, and 31 to 34; these read LL, EEE, and YKSL. A helical; Signal-anchor for type II membrane protein membrane pass occupies residues 38–58; the sequence is LGHGALVLQLLSFTLLAGLLI. At 59 to 450 the chain is on the extracellular side; it reads QVSKFPSSIS…APATPNPPPV (392 aa). Asparagine 80 is a glycosylation site (N-linked (GlcNAc...) asparagine). Repeat copies occupy residues 96–118, 119–141, 142–164, 165–187, 188–210, 211–233, 234–256, 257–279, and 280–303. A 9 X approximate tandem repeats region spans residues 96–303; the sequence is KLQEIYQELT…AVERLCRPCP (208 aa). 3 disulfides stabilise this stretch: cysteine 302–cysteine 313, cysteine 330–cysteine 423, and cysteine 402–cysteine 415. Residues 309–424 enclose the C-type lectin domain; that stretch reads FQGNCYFMSN…CNLAKFWICK (116 aa). Glutamate 393, asparagine 395, valine 397, glutamate 400, asparagine 411, and aspartate 412 together coordinate Ca(2+).

As to quaternary structure, homotetramer. Interacts with C1QBP; the interaction is indicative for a C1q:C1QBP:CD209 signaling complex. Interacts with ICAM2 and ICAM3 by binding to mannose-like carbohydrates. Interacts (via C-type lectin domain) with CEACAM1 (via Lewis X moieties); this interaction is regulated by the glycosylation pattern of CEACAM1 on cell types and regulates contact between dendritic cells and neutrophils.

Its subcellular location is the membrane. Its function is as follows. Pathogen-recognition receptor expressed on the surface of immature dendritic cells (DCs) and involved in initiation of primary immune response. Thought to mediate the endocytosis of pathogens which are subsequently degraded in lysosomal compartments. The receptor returns to the cell membrane surface and the pathogen-derived antigens are presented to resting T-cells via MHC class II proteins to initiate the adaptive immune response. Probably recognizes in a calcium-dependent manner high mannose N-linked oligosaccharides in a variety of pathogen antigens. On DCs it is a high affinity receptor for ICAM2 and ICAM3 by binding to mannose-like carbohydrates. May act as a DC rolling receptor that mediates transendothelial migration of DC presursors from blood to tissues by binding endothelial ICAM2. Seems to regulate DC-induced T-cell proliferation by binding to ICAM3 on T-cells in the immunological synapse formed between DC and T-cells. This is CD209 antigen (CD209) from Hylobates lar (Lar gibbon).